A 380-amino-acid chain; its full sequence is Putative 8-amino-7-oxononanoate synthase (380 aa).

Residue arginine 18 participates in substrate binding. 106–107 (GY) contributes to the pyridoxal 5'-phosphate binding site. Histidine 131 serves as a coordination point for substrate. Residues serine 179, 205 to 208 (DEAH), and 236 to 239 (TFGK) contribute to the pyridoxal 5'-phosphate site. An N6-(pyridoxal phosphate)lysine modification is found at lysine 239. Threonine 352 contributes to the substrate binding site.

Belongs to the class-II pyridoxal-phosphate-dependent aminotransferase family. BioF subfamily. Homodimer. The cofactor is pyridoxal 5'-phosphate.

It carries out the reaction 6-carboxyhexanoyl-[ACP] + L-alanine + H(+) = (8S)-8-amino-7-oxononanoate + holo-[ACP] + CO2. Its pathway is cofactor biosynthesis; biotin biosynthesis. Functionally, catalyzes the decarboxylative condensation of pimeloyl-[acyl-carrier protein] and L-alanine to produce 8-amino-7-oxononanoate (AON), [acyl-carrier protein], and carbon dioxide. This is Putative 8-amino-7-oxononanoate synthase (bioF) from Neisseria meningitidis serogroup C (strain 053442).